A 39-amino-acid polypeptide reads, in one-letter code: Photosystem II reaction center protein L (39 aa).

The helical transmembrane segment at 18 to 38 threads the bilayer; sequence SLYLGLLLTFVMGILFSSYFF.

The protein belongs to the PsbL family. PSII is composed of 1 copy each of membrane proteins PsbA, PsbB, PsbC, PsbD, PsbE, PsbF, PsbH, PsbI, PsbJ, PsbK, PsbL, PsbM, PsbT, PsbX, PsbY, Psb30/Ycf12, peripheral proteins PsbO, CyanoQ (PsbQ), PsbU, PsbV and a large number of cofactors. It forms dimeric complexes.

The protein localises to the cellular thylakoid membrane. Functionally, one of the components of the core complex of photosystem II (PSII). PSII is a light-driven water:plastoquinone oxidoreductase that uses light energy to abstract electrons from H(2)O, generating O(2) and a proton gradient subsequently used for ATP formation. It consists of a core antenna complex that captures photons, and an electron transfer chain that converts photonic excitation into a charge separation. This subunit is found at the monomer-monomer interface and is required for correct PSII assembly and/or dimerization. This chain is Photosystem II reaction center protein L, found in Prochlorococcus marinus (strain MIT 9211).